The chain runs to 74 residues: Cytochrome c oxidase subunit 3 (74 aa).

2 consecutive transmembrane segments (helical) span residues 15–37 (SPWP…KWFH) and 42–59 (SLFL…YQWW).

Belongs to the cytochrome c oxidase subunit 3 family. Component of the cytochrome c oxidase (complex IV, CIV), a multisubunit enzyme composed of a catalytic core of 3 subunits and several supernumerary subunits. The complex exists as a monomer or a dimer and forms supercomplexes (SCs) in the inner mitochondrial membrane with ubiquinol-cytochrome c oxidoreductase (cytochrome b-c1 complex, complex III, CIII).

It is found in the mitochondrion inner membrane. It carries out the reaction 4 Fe(II)-[cytochrome c] + O2 + 8 H(+)(in) = 4 Fe(III)-[cytochrome c] + 2 H2O + 4 H(+)(out). Functionally, component of the cytochrome c oxidase, the last enzyme in the mitochondrial electron transport chain which drives oxidative phosphorylation. The respiratory chain contains 3 multisubunit complexes succinate dehydrogenase (complex II, CII), ubiquinol-cytochrome c oxidoreductase (cytochrome b-c1 complex, complex III, CIII) and cytochrome c oxidase (complex IV, CIV), that cooperate to transfer electrons derived from NADH and succinate to molecular oxygen, creating an electrochemical gradient over the inner membrane that drives transmembrane transport and the ATP synthase. Cytochrome c oxidase is the component of the respiratory chain that catalyzes the reduction of oxygen to water. Electrons originating from reduced cytochrome c in the intermembrane space (IMS) are transferred via the dinuclear copper A center (CU(A)) of subunit 2 and heme A of subunit 1 to the active site in subunit 1, a binuclear center (BNC) formed by heme A3 and copper B (CU(B)). The BNC reduces molecular oxygen to 2 water molecules using 4 electrons from cytochrome c in the IMS and 4 protons from the mitochondrial matrix. The sequence is that of Cytochrome c oxidase subunit 3 (mt:CoIII) from Drosophila simulans (Fruit fly).